Here is a 106-residue protein sequence, read N- to C-terminus: Antitoxin MazE3 (106 aa).

In terms of assembly, forms a complex with cognate toxin MazF3, possibly with 1:1 stoichiometry.

Antitoxin component of a type II toxin-antitoxin (TA) system. Upon expression in E.coli and M.smegmatis neutralizes the effect of cognate toxin MazF3. Overexpression of MazE3 alone decreased persister cells formation in M.smegmatis upon challenge with gentamicin or kanamycin. This Mycobacterium tuberculosis (strain ATCC 25618 / H37Rv) protein is Antitoxin MazE3 (mazE3).